Consider the following 107-residue polypeptide: Potassium voltage-gated channel subfamily E member 3 (107 aa).

Residues asparagine 5, asparagine 22, and asparagine 45 are each glycosylated (N-linked (GlcNAc...) asparagine). A disordered region spans residues 31 to 54 (CRPGPGPGSGTGPDNQTEDHRASL). The helical transmembrane segment at 61–81 (SYMYILFVMFLFAVTVGSLIL) threads the bilayer. The tract at residues 72–83 (FAVTVGSLILGY) is interaction with KCNQ1. At 82–103 (GYTRSRKVDKRSDPYHVYIKNR) the chain is on the cytoplasmic side.

It belongs to the potassium channel KCNE family. As to quaternary structure, interacts with KCNB1. Interacts with KCNC2. Associates with KCNC4/Kv3.4. Interacts with KCNQ1; associates with a KCNQ1:KCNE3 stoichiometry of 4:4; produces a current with nearly instantaneous activation with a linear current-voltage relationship and alters membrane raft localization; affects KCNQ1 structure and gating properties.

It localises to the cell membrane. It is found in the cytoplasm. The protein localises to the perikaryon. Its subcellular location is the cell projection. The protein resides in the dendrite. It localises to the membrane raft. Its function is as follows. Ancillary protein that functions as a regulatory subunit of the voltage-gated potassium (Kv) channel complex composed of pore-forming and potassium-conducting alpha subunits and of regulatory beta subunits. KCNE3 beta subunit modulates the gating kinetics and enhances stability of the channel complex. Alters the gating of the delayed rectifier Kv channel containing KCNB1 alpha subunit. Associates with KCNC4/Kv3.4 alpha subunit to form the subthreshold Kv channel in skeletal muscle and to establish the resting membrane potential (RMP) in muscle cells. Association with KCNQ1/KCLQT1 alpha subunit may form the intestinal cAMP-stimulated potassium channel involved in chloride secretion that produces a current with nearly instantaneous activation with a linear current-voltage relationship. The protein is Potassium voltage-gated channel subfamily E member 3 of Rattus norvegicus (Rat).